Consider the following 76-residue polypeptide: DNA-binding protein S1FA2 (76 aa).

A Nuclear localization signal motif is present at residues P50–K55. Over residues P51–K66 the composition is skewed to basic residues. The tract at residues P51–E76 is disordered.

Belongs to the S1FA transcription factor family.

Its subcellular location is the nucleus. Its function is as follows. DNA-binding protein that specifically recognizes a negative element (S1F) within the RPS1 promoter. The sequence is that of DNA-binding protein S1FA2 (S1FA2) from Arabidopsis thaliana (Mouse-ear cress).